A 233-amino-acid chain; its full sequence is Large ribosomal subunit protein uL22m (233 aa).

Belongs to the universal ribosomal protein uL22 family. Component of the mitochondrial ribosome large subunit (39S) which comprises a 16S rRNA and about 50 distinct proteins.

Its subcellular location is the mitochondrion. This Drosophila pseudoobscura pseudoobscura (Fruit fly) protein is Large ribosomal subunit protein uL22m (mRpL22).